We begin with the raw amino-acid sequence, 274 residues long: Large ribosomal subunit protein uL2 (274 aa).

The disordered stretch occupies residues 224–256; sequence VMNPVDHPHGGGEGKTGEGRHPVDPWGNLTKGY. A compositionally biased stretch (basic and acidic residues) spans 229-246; the sequence is DHPHGGGEGKTGEGRHPV.

This sequence belongs to the universal ribosomal protein uL2 family. Part of the 50S ribosomal subunit. Forms a bridge to the 30S subunit in the 70S ribosome.

One of the primary rRNA binding proteins. Required for association of the 30S and 50S subunits to form the 70S ribosome, for tRNA binding and peptide bond formation. It has been suggested to have peptidyltransferase activity; this is somewhat controversial. Makes several contacts with the 16S rRNA in the 70S ribosome. This is Large ribosomal subunit protein uL2 from Polaromonas sp. (strain JS666 / ATCC BAA-500).